The following is a 267-amino-acid chain: tRNA pseudouridine synthase A (267 aa).

Aspartate 53 functions as the Nucleophile in the catalytic mechanism. Tyrosine 114 contributes to the substrate binding site.

The protein belongs to the tRNA pseudouridine synthase TruA family. Homodimer.

The catalysed reaction is uridine(38/39/40) in tRNA = pseudouridine(38/39/40) in tRNA. Its function is as follows. Formation of pseudouridine at positions 38, 39 and 40 in the anticodon stem and loop of transfer RNAs. The chain is tRNA pseudouridine synthase A from Chlamydia trachomatis serovar A (strain ATCC VR-571B / DSM 19440 / HAR-13).